A 382-amino-acid chain; its full sequence is Mating-type protein a-1 (382 aa).

Residues 116-184 (IPRPPNAYIL…RLLLENPDYR (69 aa)) constitute a DNA-binding region (HMG box).

Binds in vitro to DNA containing a specific core sequence 5'-CTTTG-3'.

The protein resides in the nucleus. Mating type proteins are sequence specific DNA-binding proteins that act as master switches in yeast differentiation by controlling gene expression in a cell type-specific fashion. Transcriptional activator that induces the transcription of a-specific genes like mating factor mfa-1. Required for mating as an a-cell, blocking of heterokaryon formation (vegetative incompatibility) and for perithecium induction. The protein is Mating-type protein a-1 (mta-1) of Neurospora crassa.